A 170-amino-acid polypeptide reads, in one-letter code: Peptide deformylase (170 aa).

Residues C91 and H133 each coordinate Fe cation. E134 is a catalytic residue. H137 serves as a coordination point for Fe cation.

Belongs to the polypeptide deformylase family. Requires Fe(2+) as cofactor.

The catalysed reaction is N-terminal N-formyl-L-methionyl-[peptide] + H2O = N-terminal L-methionyl-[peptide] + formate. Removes the formyl group from the N-terminal Met of newly synthesized proteins. Requires at least a dipeptide for an efficient rate of reaction. N-terminal L-methionine is a prerequisite for activity but the enzyme has broad specificity at other positions. In Glaesserella parasuis serovar 5 (strain SH0165) (Haemophilus parasuis), this protein is Peptide deformylase.